The following is a 165-amino-acid chain: Phosphopantetheine adenylyltransferase (165 aa).

Threonine 10 is a binding site for substrate. Residues 10–11 (TF) and histidine 18 contribute to the ATP site. Residues lysine 42, leucine 75, and arginine 89 each contribute to the substrate site. Residues 90–92 (GVR), glutamate 100, and 125–131 (VSFISSS) contribute to the ATP site.

The protein belongs to the bacterial CoaD family. Homohexamer. It depends on Mg(2+) as a cofactor.

The protein localises to the cytoplasm. The enzyme catalyses (R)-4'-phosphopantetheine + ATP + H(+) = 3'-dephospho-CoA + diphosphate. It functions in the pathway cofactor biosynthesis; coenzyme A biosynthesis; CoA from (R)-pantothenate: step 4/5. In terms of biological role, reversibly transfers an adenylyl group from ATP to 4'-phosphopantetheine, yielding dephospho-CoA (dPCoA) and pyrophosphate. This chain is Phosphopantetheine adenylyltransferase, found in Buchnera aphidicola subsp. Acyrthosiphon pisum (strain 5A).